The sequence spans 803 residues: Exo-1,4-beta-xylosidase xlnD (803 aa).

The signal sequence occupies residues Met1–Ser18. 6 N-linked (GlcNAc...) asparagine glycosylation sites follow: Asn21, Asn44, Asn85, Asn122, Asn140, and Asn234. Asp307 is an active-site residue. N-linked (GlcNAc...) asparagine glycosylation is found at Asn437, Asn474, Asn515, Asn611, Asn676, and Asn698.

Belongs to the glycosyl hydrolase 3 family.

It localises to the secreted. The enzyme catalyses Hydrolysis of (1-&gt;4)-beta-D-xylans, to remove successive D-xylose residues from the non-reducing termini.. It participates in glycan degradation; xylan degradation. Functionally, xylan 1,4-beta-xylosidase involved in the hydrolysis of xylan, a major structural heterogeneous polysaccharide found in plant biomass representing the second most abundant polysaccharide in the biosphere, after cellulose. The protein is Exo-1,4-beta-xylosidase xlnD (xlnD) of Emericella nidulans (strain FGSC A4 / ATCC 38163 / CBS 112.46 / NRRL 194 / M139) (Aspergillus nidulans).